A 217-amino-acid polypeptide reads, in one-letter code: Thiopurine S-methyltransferase (217 aa).

S-adenosyl-L-methionine-binding residues include Trp-11, Leu-46, Glu-67, and Arg-122.

The protein belongs to the class I-like SAM-binding methyltransferase superfamily. TPMT family.

The protein localises to the cytoplasm. It catalyses the reaction S-adenosyl-L-methionine + a thiopurine = S-adenosyl-L-homocysteine + a thiopurine S-methylether.. This Vibrio atlanticus (strain LGP32) (Vibrio splendidus (strain Mel32)) protein is Thiopurine S-methyltransferase.